We begin with the raw amino-acid sequence, 114 residues long: MSSLSAQKCEACHADAPKVSDEELAQLITKIPDWVPEVRDGIMQLERVYKFKNFKQAIAFTNKVGDMAEDEGHHPGLLTEWGKVTVTWWSHSIKGLHKNDFICAAKTDDVFNAL.

This sequence belongs to the pterin-4-alpha-carbinolamine dehydratase family.

The catalysed reaction is (4aS,6R)-4a-hydroxy-L-erythro-5,6,7,8-tetrahydrobiopterin = (6R)-L-erythro-6,7-dihydrobiopterin + H2O. The sequence is that of Putative pterin-4-alpha-carbinolamine dehydratase from Pseudoalteromonas translucida (strain TAC 125).